The following is a 202-amino-acid chain: Small ribosomal subunit protein uS5 (202 aa).

Positions 1–13 (MPGQQRRGGGSGG) are enriched in gly residues. Residues 1–31 (MPGQQRRGGGSGGSDRRERRDRSGGGPAQEK) are disordered. Basic and acidic residues predominate over residues 14-23 (SDRRERRDRS). An S5 DRBM domain is found at 34 to 97 (YVERVVAINR…EEAKKHFFKV (64 aa)).

It belongs to the universal ribosomal protein uS5 family. Part of the 30S ribosomal subunit. Contacts proteins S4 and S8.

Its function is as follows. With S4 and S12 plays an important role in translational accuracy. Functionally, located at the back of the 30S subunit body where it stabilizes the conformation of the head with respect to the body. This is Small ribosomal subunit protein uS5 from Frankia alni (strain DSM 45986 / CECT 9034 / ACN14a).